The primary structure comprises 320 residues: 1,5-anhydro-D-fructose reductase (320 aa).

Aspartate 35 lines the NADP(+) pocket. Tyrosine 40 acts as the Proton donor in catalysis. A substrate-binding site is contributed by histidine 102. Residues glutamine 194 and 265–277 (IPGS…IKEN) contribute to the NADP(+) site.

Belongs to the aldo/keto reductase family. In terms of assembly, monomer. Specifically expressed in testis. Expressed in testicular germ cells and testis interstitial cells.

It localises to the cytoplasm. The enzyme catalyses 1,5-anhydro-D-glucitol + NADP(+) = 1,5-anhydro-D-fructose + NADPH + H(+). Inhibited by p-chloromercuribenzoic acid and alkyliodines. Its function is as follows. Catalyzes the NADPH-dependent reduction of 1,5-anhydro-D-fructose (AF) to 1,5-anhydro-D-glucitol. Has low NADPH-dependent reductase activity towards 9,10-phenanthrenequinone (in vitro). The polypeptide is 1,5-anhydro-D-fructose reductase (AKR1E2) (Homo sapiens (Human)).